The following is a 525-amino-acid chain: uncharacterized protein (525 aa).

Helical transmembrane passes span 7 to 29 (FLAT…LGQI), 34 to 51 (LRFG…VGAL), 64 to 82 (GLGV…GSTF), 92 to 114 (LMLA…GRLF), 121 to 143 (VAGL…ATHG), and 148 to 170 (LVGY…AIIA). RCK C-terminal domains follow at residues 178 to 257 (KDNT…LGHV) and 259 to 341 (ERTL…LFGD). The next 5 membrane-spanning stretches (helical) occupy residues 351-370 (ALSL…LMVA), 374-396 (GLQF…GSIH), 416-438 (LGLM…SQAV), 443-465 (LAVI…AAAW), and 502-524 (SAYG…VIVL).

Belongs to the AAE transporter (TC 2.A.81) family.

It is found in the cell membrane. This is an uncharacterized protein from Cutibacterium acnes (strain DSM 16379 / KPA171202) (Propionibacterium acnes).